We begin with the raw amino-acid sequence, 162 residues long: Phosphopantetheine adenylyltransferase (162 aa).

Position 10 (threonine 10) interacts with substrate. Residues 10–11 and histidine 18 each bind ATP; that span reads TF. 3 residues coordinate substrate: lysine 42, leucine 74, and arginine 88. Residues 89-91, glutamate 99, and 124-130 each bind ATP; these read GLR and NSFISST.

The protein belongs to the bacterial CoaD family. In terms of assembly, homohexamer. The cofactor is Mg(2+).

It localises to the cytoplasm. The enzyme catalyses (R)-4'-phosphopantetheine + ATP + H(+) = 3'-dephospho-CoA + diphosphate. The protein operates within cofactor biosynthesis; coenzyme A biosynthesis; CoA from (R)-pantothenate: step 4/5. Functionally, reversibly transfers an adenylyl group from ATP to 4'-phosphopantetheine, yielding dephospho-CoA (dPCoA) and pyrophosphate. The polypeptide is Phosphopantetheine adenylyltransferase (Alteromonas mediterranea (strain DSM 17117 / CIP 110805 / LMG 28347 / Deep ecotype)).